Consider the following 247-residue polypeptide: Large ribosomal subunit protein uL30 (247 aa).

M1 bears the N-acetylmethionine mark. Tandem repeats lie at residues 7–17 (KKKVPAVPETL), 18–29 (KKKRRNFAELKI), 30–41 (KRLRKKFAQKML), and 42–53 (RKARRKLIYEKA). The interval 7–53 (KKKVPAVPETLKKKRRNFAELKIKRLRKKFAQKMLRKARRKLIYEKA) is 4 X 12 AA tandem repeats. Position 16 is a phosphothreonine (T16). K123 is modified (N6-acetyllysine). Position 126 is an N6-succinyllysine (K126). Y138 is modified (phosphotyrosine).

This sequence belongs to the universal ribosomal protein uL30 family. In terms of assembly, component of the large ribosomal subunit. Homodimer. Interacts with DHX33.

The protein resides in the cytoplasm. Functionally, component of the large ribosomal subunit. The ribosome is a large ribonucleoprotein complex responsible for the synthesis of proteins in the cell. Binds to G-rich structures in 28S rRNA and in mRNAs. Plays a regulatory role in the translation apparatus; inhibits cell-free translation of mRNAs. This is Large ribosomal subunit protein uL30 (RPL7) from Pongo abelii (Sumatran orangutan).